We begin with the raw amino-acid sequence, 245 residues long: Probable phosphatase PC1_1798 (245 aa).

Residues His-7, His-9, His-15, His-40, Glu-73, His-101, His-131, Asp-192, and His-194 each coordinate Zn(2+).

Belongs to the PHP family. Homotrimer. It depends on Zn(2+) as a cofactor.

This Pectobacterium carotovorum subsp. carotovorum (strain PC1) protein is Probable phosphatase PC1_1798.